Consider the following 274-residue polypeptide: HTH-type transcriptional regulator GadX (274 aa).

Residues 145–242 (TRVCTVINNN…GMTPTEYQER (98 aa)) enclose the HTH araC/xylS-type domain. 2 DNA-binding regions (H-T-H motif) span residues 162-183 (ARIASELLMSPSLLKKKLREEE) and 209-232 (IKRVAVSCGYHSVSYFIYVFRNYY).

Homodimer.

Functionally, positively regulates the expression of about fifteen genes involved in acid resistance such as gadA, gadB and gadC. Depending on the conditions (growth phase and medium), can repress gadW. The polypeptide is HTH-type transcriptional regulator GadX (gadX) (Escherichia coli (strain K12)).